Consider the following 202-residue polypeptide: LexA repressor (202 aa).

The H-T-H motif DNA-binding region spans 28–48 (RAEIASRLGFRSPNAAEEHLK). Catalysis depends on for autocatalytic cleavage activity residues S119 and K156.

The protein belongs to the peptidase S24 family. As to quaternary structure, homodimer.

It carries out the reaction Hydrolysis of Ala-|-Gly bond in repressor LexA.. Represses a number of genes involved in the response to DNA damage (SOS response), including recA and lexA. Binds to the 16 bp palindromic sequence 5'-CTGTATATATATACAG-3'. In the presence of single-stranded DNA, RecA interacts with LexA causing an autocatalytic cleavage which disrupts the DNA-binding part of LexA, leading to derepression of the SOS regulon and eventually DNA repair. In Sodalis glossinidius (strain morsitans), this protein is LexA repressor.